The chain runs to 217 residues: Large ribosomal subunit protein uL3 (217 aa).

The protein belongs to the universal ribosomal protein uL3 family. As to quaternary structure, part of the 50S ribosomal subunit. Forms a cluster with proteins L14 and L19.

One of the primary rRNA binding proteins, it binds directly near the 3'-end of the 23S rRNA, where it nucleates assembly of the 50S subunit. The polypeptide is Large ribosomal subunit protein uL3 (Brachyspira hyodysenteriae (strain ATCC 49526 / WA1)).